The chain runs to 118 residues: TVDVTACAPGLAIPAPPLPTCRTFARPRTCGLGGPYGPVDPSPVLKQRCCRELAAVPSRCRCAALGFMMDGVDAPLQDFRGCTREMQRIYAVSRLTRAAECNLPTIPGGGCHLSNSPR.

Cystine bridges form between cysteine 7-cysteine 60, cysteine 21-cysteine 49, cysteine 30-cysteine 82, and cysteine 50-cysteine 101.

It belongs to the protease inhibitor I6 (cereal trypsin/alpha-amylase inhibitor) family.

It is found in the secreted. Alpha-amylase inhibitor. The chain is Alpha-amylase inhibitor 4 from Sorghum bicolor (Sorghum).